Reading from the N-terminus, the 663-residue chain is MAGDRLPRKVMDAKKLASLLRGGPGGPLVIDSRSFVEYNSCHVLSSVNICCSKLVKRRLQQGKVTIAELIQPATRSQVDATEPQDVVVYDQSTRDASVLAADSFLSILLSKLDGCFDSVAILTGGFATFSSCFPGLCEGKPATLPSMSLSQPCLPVPSVGLTRILPHLYLGSQKDVLNKDLMTQNGISYVLNASNSCPKPDFICESRFMRIPINDNYCEKLLPWLDKSIEFIDKAKLSSCQVIVHCLAGISRSATIAIAYIMKTMGMSSDDAYRFVKDRRPSISPNFNFLGQLLEYERSLKLLAALQTDGPHLGTPEPLMGPAAGIPLPRLPPSTSESAATGSEAATAAREGSPSAGGDAPIPSTAPATSALQQGLRGLHLSSDRLQDTNRLKRSFSLDIKSAYAPSRRPDFPGPPDPGEAPKLCKLDSPSGGTLGLPSPSPDSPDSVPECRPRPRRRRPPASSPARSPAHGLGLNFGDTARQTPRHGLSALSAPGLPGPGQPAGPGGWVPPLDSPGTPSPDGPWCFSPEGAQGPGAVFSAFGRVSAGAPGPGNSSSSGGGGGGGGGGGGGGGGGGSSSSNSSSSSSSSSSSSSSSSSSSDLRRRDVRTGWPEEPAADAQFKRRSCQMEFEEGMVEGRARGEELAALGKQTSFSGSVEVIEVS.

The Rhodanese domain occupies 23–138 (GPGGPLVIDS…FSSCFPGLCE (116 aa)). A Tyrosine-protein phosphatase domain is found at 160-302 (GLTRILPHLY…LLEYERSLKL (143 aa)). Residue Cys246 is the Phosphocysteine intermediate of the active site. Disordered stretches follow at residues 313–367 (LGTP…STAP) and 404–624 (YAPS…FKRR). Low complexity-rich tracts occupy residues 334 to 353 (STSESAATGSEAATAAREGS), 427 to 448 (LDSPSGGTLGLPSPSPDSPDSV), and 546 to 557 (SAGAPGPGNSSS). A compositionally biased stretch (gly residues) spans 558 to 577 (SGGGGGGGGGGGGGGGGGGS). Low complexity predominate over residues 578-600 (SSSNSSSSSSSSSSSSSSSSSSS).

The protein belongs to the protein-tyrosine phosphatase family. Non-receptor class dual specificity subfamily. In terms of assembly, monomer. As to expression, expressed predominantly in brain and lung.

It localises to the cytoplasm. It is found in the nucleus. It catalyses the reaction O-phospho-L-tyrosyl-[protein] + H2O = L-tyrosyl-[protein] + phosphate. It carries out the reaction O-phospho-L-seryl-[protein] + H2O = L-seryl-[protein] + phosphate. The catalysed reaction is O-phospho-L-threonyl-[protein] + H2O = L-threonyl-[protein] + phosphate. Functionally, has phosphatase activity with synthetic phosphatase substrates and negatively regulates mitogen-activated protein kinase activity, presumably by catalysing their dephosphorylation. Expected to display protein phosphatase activity toward phosphotyrosine, phosphoserine and phosphothreonine residues. In Mus musculus (Mouse), this protein is Dual specificity protein phosphatase 8 (Dusp8).